Here is a 719-residue protein sequence, read N- to C-terminus: Probable 1-deoxy-D-xylulose-5-phosphate synthase, chloroplastic (719 aa).

The N-terminal 57 residues, 1 to 57 (MALCAYAFPGILNRTVAVASDASKPTPLFSEWIHGTDLQFQFHQKLTQVKKRSRTVQ), are a transit peptide targeting the chloroplast. Residues H145 and 186 to 188 (GHS) each bind thiamine diphosphate. D217 lines the Mg(2+) pocket. Residues 218-219 (GA), N246, Y367, and E449 contribute to the thiamine diphosphate site. N246 serves as a coordination point for Mg(2+).

Belongs to the transketolase family. DXPS subfamily. In terms of assembly, homodimer. Mg(2+) is required as a cofactor. It depends on thiamine diphosphate as a cofactor.

The protein resides in the plastid. Its subcellular location is the chloroplast. The enzyme catalyses D-glyceraldehyde 3-phosphate + pyruvate + H(+) = 1-deoxy-D-xylulose 5-phosphate + CO2. Its pathway is metabolic intermediate biosynthesis; 1-deoxy-D-xylulose 5-phosphate biosynthesis; 1-deoxy-D-xylulose 5-phosphate from D-glyceraldehyde 3-phosphate and pyruvate: step 1/1. Catalyzes the acyloin condensation reaction between C atoms 2 and 3 of pyruvate and glyceraldehyde 3-phosphate to yield 1-deoxy-D-xylulose-5-phosphate (DXP). The protein is Probable 1-deoxy-D-xylulose-5-phosphate synthase, chloroplastic (TKT2) of Capsicum annuum (Capsicum pepper).